The sequence spans 309 residues: Cytidine deaminase (309 aa).

CMP/dCMP-type deaminase domains lie at 48-168 (DEDA…FGPR) and 200-309 (DDND…SLSL). A substrate-binding site is contributed by 89–91 (NME). Zn(2+) is bound at residue histidine 102. The active-site Proton donor is glutamate 104. Residues cysteine 129 and cysteine 132 each contribute to the Zn(2+) site.

The protein belongs to the cytidine and deoxycytidylate deaminase family. As to quaternary structure, homodimer. Zn(2+) is required as a cofactor.

The enzyme catalyses cytidine + H2O + H(+) = uridine + NH4(+). The catalysed reaction is 2'-deoxycytidine + H2O + H(+) = 2'-deoxyuridine + NH4(+). Its function is as follows. This enzyme scavenges exogenous and endogenous cytidine and 2'-deoxycytidine for UMP synthesis. This chain is Cytidine deaminase, found in Sodalis glossinidius (strain morsitans).